We begin with the raw amino-acid sequence, 507 residues long: MVTIRADEISNIIRERIEQYNREVTIVNTGTVLQVGDGIARIHGLDEVMAGELVEFEEGTIGIALNLESNNVGVVLMGDGLLIQEGSSVKATGRIAQIPVSEAYLGRVINALAKPIDGRGEISASESRLIESPAPGIISRRSVYEPLQTGLIAIDSMIPIGRGQRELIIGDRQTGKTAVATDTILNQKGQNVICVYVAIGQKASSVAQVVTTFQEQGAMEYTIVVAETADSPATLQYLAPYTGAALAEYFMYRERHTSIIYDDPSKQAQAYRQMSLLLRRPPGREAYPGDVFYLHSRLLERAAKSSSRLGEGSMTALPIVETQSGDVSAYIPTNVISITDGQIFLSADLFNAGIRPAINVGISVSRVGSAAQIKAMKQVAGKSKLELAQFAELEAFAQFASDLDKATQNQLARGQRLRELLKQSQSTPLTVEDQIVTIYTGANGYLDPLEIGQVKKFLVQLRTYLKTNKPQLQEIISSTKTFTEQAEALLKEAIPEQIELFLLQEQT.

170–177 provides a ligand contact to ATP; that stretch reads GDRQTGKT.

Belongs to the ATPase alpha/beta chains family. As to quaternary structure, F-type ATPases have 2 components, CF(1) - the catalytic core - and CF(0) - the membrane proton channel. CF(1) has five subunits: alpha(3), beta(3), gamma(1), delta(1), epsilon(1). CF(0) has four main subunits: a, b, b' and c.

The protein resides in the plastid. It localises to the chloroplast thylakoid membrane. It catalyses the reaction ATP + H2O + 4 H(+)(in) = ADP + phosphate + 5 H(+)(out). Produces ATP from ADP in the presence of a proton gradient across the membrane. The alpha chain is a regulatory subunit. This is ATP synthase subunit alpha, chloroplastic from Liriodendron tulipifera (Tuliptree).